Consider the following 275-residue polypeptide: UDP-Gal:alpha-D-GlcNAc-diphosphoundecaprenol beta-1,3-galactosyltransferase (275 aa).

It belongs to the glycosyltransferase 2 family. Requires Mn(2+) as cofactor.

It is found in the cell inner membrane. It catalyses the reaction N-acetyl-alpha-D-glucosaminyl-di-trans,octa-cis-undecaprenyl diphosphate + UDP-alpha-D-galactose = beta-D-Gal-(1-&gt;3)-alpha-D-GlcNAc-di-trans,octa-cis-undecaprenyl diphosphate + UDP + H(+). The protein operates within bacterial outer membrane biogenesis; LPS O-antigen biosynthesis. Its function is as follows. Catalyzes the addition of Gal, the second sugar moiety of the O7-antigen repeating unit, to GlcNAc-pyrophosphate-undecaprenol. This Escherichia coli protein is UDP-Gal:alpha-D-GlcNAc-diphosphoundecaprenol beta-1,3-galactosyltransferase (wbbD).